A 355-amino-acid polypeptide reads, in one-letter code: MKIAVAMSGGVDSSVAAALLKEQGHEIIGITMQFFAPSCQGAGTPAHDAAVVAAHLGITHHLLDLEHDFRQLIINDFISQYRSGQTPNPCVRCNRFVKFGLLLDAARERGADLLATGHYARTSIDPDGTRHLRVAANLRKDQTYFLHTLSQERLARVVFPLGDIGSKDEVRDLAHRFGLPVAEKGDSQEVCFIPNDDYVSYLEENCALGGETGDIVHVNGRLLGRHRGTHRYTIGQRKGLGIAWSEPLYVVEIDAARKLVVVGEEPHVYAQGLKAEEVGWIIAPGKEEFEASCKIRYRHQPVACRVTLLQGGACRVLFHEPLKAVTPGQSVVFYQDDEVLGGGRITAAIKRDGEA.

ATP contacts are provided by residues 6 to 13 (AMSGGVDS) and Met32. Cys93 serves as the catalytic Nucleophile. Cysteines 93 and 191 form a disulfide. Residue Gly117 participates in ATP binding. An interaction with tRNA region spans residues 140–142 (KDQ). Cys191 functions as the Cysteine persulfide intermediate in the catalytic mechanism. The interaction with tRNA stretch occupies residues 296-297 (RY).

It belongs to the MnmA/TRMU family.

The protein resides in the cytoplasm. The catalysed reaction is S-sulfanyl-L-cysteinyl-[protein] + uridine(34) in tRNA + AH2 + ATP = 2-thiouridine(34) in tRNA + L-cysteinyl-[protein] + A + AMP + diphosphate + H(+). Catalyzes the 2-thiolation of uridine at the wobble position (U34) of tRNA, leading to the formation of s(2)U34. The protein is tRNA-specific 2-thiouridylase MnmA of Pelobacter propionicus (strain DSM 2379 / NBRC 103807 / OttBd1).